A 128-amino-acid chain; its full sequence is Large ribosomal subunit protein bL12 (128 aa).

This sequence belongs to the bacterial ribosomal protein bL12 family. In terms of assembly, homodimer. Part of the ribosomal stalk of the 50S ribosomal subunit. Forms a multimeric L10(L12)X complex, where L10 forms an elongated spine to which 2 to 4 L12 dimers bind in a sequential fashion. Binds GTP-bound translation factors.

Functionally, forms part of the ribosomal stalk which helps the ribosome interact with GTP-bound translation factors. Is thus essential for accurate translation. This is Large ribosomal subunit protein bL12 from Acidithiobacillus ferrooxidans (strain ATCC 23270 / DSM 14882 / CIP 104768 / NCIMB 8455) (Ferrobacillus ferrooxidans (strain ATCC 23270)).